The sequence spans 176 residues: Probable superoxide oxidase CybB (176 aa).

Helical transmembrane passes span 7 to 27, 44 to 64, 85 to 105, and 137 to 157; these read CLQI…WSSI, IHFS…LIQL, VGHW…IAIL, and HLLL…AALL. Heme b-binding residues include histidine 13 and histidine 45. Positions 137 and 151 each coordinate heme b.

This sequence belongs to the cytochrome b561 family. Requires heme b as cofactor.

It localises to the cell inner membrane. It carries out the reaction a ubiquinol + 2 O2 = 2 superoxide + a ubiquinone + 2 H(+). Functionally, B-type di-heme cytochrome. Catalyzes the oxidation of superoxide to molecular oxygen and transfers the extracted electrons to ubiquinone through the two hemes. This chain is Probable superoxide oxidase CybB (cybB), found in Yersinia pestis.